The sequence spans 609 residues: Chaperone protein DnaK (609 aa).

Residue Thr173 is modified to Phosphothreonine; by autocatalysis. The span at 525-542 (ENISDEDKKNAEEKKDAL) shows a compositional bias: basic and acidic residues. Disordered stretches follow at residues 525 to 554 (ENISDEDKKNAEEKKDALKTALEGEDIDDI) and 574 to 609 (EQAQQAQQQGQEEQGSQDSTVEDADFKEVKDDEDKK). Over residues 574 to 587 (EQAQQAQQQGQEEQ) the composition is skewed to low complexity. Residues 597-609 (ADFKEVKDDEDKK) show a composition bias toward basic and acidic residues.

Belongs to the heat shock protein 70 family.

Its function is as follows. Acts as a chaperone. This Staphylococcus epidermidis (strain ATCC 35984 / DSM 28319 / BCRC 17069 / CCUG 31568 / BM 3577 / RP62A) protein is Chaperone protein DnaK.